We begin with the raw amino-acid sequence, 405 residues long: BRCA1-A complex subunit Abraxas 1 (405 aa).

The 147-residue stretch at 7-153 (SALLSGFVFG…CSTYRLEHAL (147 aa)) folds into the MPN domain. The stretch at 208–262 (SLQEVHKINEMYATLQEELKKMCSDVEVSERSVEKLLTEVSQLKEEINRKKQHKI) forms a coiled coil. The disordered stretch occupies residues 365–405 (LHQDEEDCNQETKLALSSAETDEEALENPKDTNEYSYSPTF). Ser402 carries the phosphoserine modification. The short motif at 402 to 405 (SPTF) is the pSXXF motif element.

Belongs to the FAM175 family. Abraxas subfamily. Component of the BRCA1-A complex. Component of the BRISC complex. Homodimer. Interacts directly (when phosphorylated at Ser-402) with BRCA1. The phosphorylated homodimer can interact directly with two BRCA1 chains, giving rise to a heterotetramer. Post-translationally, phosphorylation of Ser-402 of the pSXXF motif by ATM or ATR constitutes a specific recognition motif for the BRCT domain of BRCA1.

The protein resides in the nucleus. In terms of biological role, involved in DNA damage response and double-strand break (DSB) repair. Component of the BRCA1-A complex, acting as a central scaffold protein that assembles the various components of the complex and mediates the recruitment of BRCA1. The BRCA1-A complex specifically recognizes 'Lys-63'-linked ubiquitinated histones H2A and H2AX at DNA lesion sites, leading to target the BRCA1-BARD1 heterodimer to sites of DNA damage at DSBs. This complex also possesses deubiquitinase activity that specifically removes 'Lys-63'-linked ubiquitin on histones H2A and H2AX. This chain is BRCA1-A complex subunit Abraxas 1, found in Gallus gallus (Chicken).